Consider the following 449-residue polypeptide: MDAKMFDTICSRDAISWLPDEVLGKILSLIPTKQAVSTSLLAKKWRTIFRLVDHLELDDSFSLQAVKDQTPGLRKHVRFVFTEDFKIFVDRTLALQCDYPIKNFSLKCHVSKYDERQKACVGRWISNVVGRGVFELDLRMKDPGIHFLPPHLVASKTLVKLTLGTQLCLGQLPSYVSLPSLKSLFIDTIVFYDIEDLCCVLLAGCPVLEELSVHHHDFIATPHTISSPTLKRLSVDYHCPDDVDSASHMSFDLPKLVYLEYSHCALGEYWQINLESLVEAKLDLGLERKVLRMDVTDLIIGIRNVQSLHLSPDSVHVIYSYCRHGLPVFKNLVNLSFGSKNKRGWRLLANLLKQSTKLETLIVKDLNGYTGDVSMPLNKVTSLHILGYRGTADEVKQLKSFIGEFECLELVQVDVAEAAEDNGKILQSKRDLMMLLGVSLPSKCQFKVT.

Residues 12 to 64 (RDAISWLPDEVLGKILSLIPTKQAVSTSLLAKKWRTIFRLVDHLELDDSFSLQ) enclose the F-box domain. 6 LRR repeats span residues 161 to 188 (LTLGTQLCLGQLPSYVSLPSLKSLFIDT), 191 to 215 (FYDIEDLCCVLLAGCPVLEELSVHH), 216 to 237 (HDFIATPHTISSPTLKRLSVDY), 239 to 263 (CPDDVDSASHMSFDLPKLVYLEYSH), 287 to 312 (ERKVLRMDVTDLIIGIRNVQSLHLSP), and 340 to 365 (KNKRGWRLLANLLKQSTKLETLIVKD).

The polypeptide is F-box/LRR-repeat protein At3g60040 (Arabidopsis thaliana (Mouse-ear cress)).